A 188-amino-acid chain; its full sequence is Putative manganese efflux pump MntP (188 aa).

The next 6 membrane-spanning stretches (helical) occupy residues 3–23 (ISAT…ASIG), 41–61 (LIFG…GMLA), 62–82 (SQFI…FLGG), 106–128 (WILV…GLAF), 143–163 (ATLI…PLLG), and 168–188 (ILGG…HFAG).

This sequence belongs to the MntP (TC 9.B.29) family.

The protein localises to the cell inner membrane. In terms of biological role, probably functions as a manganese efflux pump. This chain is Putative manganese efflux pump MntP, found in Enterobacter sp. (strain 638).